The sequence spans 887 residues: Integrator complex subunit 6 (887 aa).

The 225-residue stretch at 3–227 (ILLFLIDTSA…QCLESLVQKV (225 aa)) folds into the VWFA domain. Positions 626–633 (MMIDEADE) match the Inhibitory loop motif. Position 804 is a phosphoserine (serine 804).

It belongs to the Integrator subunit 6 family. Component of the Integrator complex, composed of core subunits INTS1, INTS2, INTS3, INTS4, INTS5, INTS6, INTS7, INTS8, INTS9/RC74, INTS10, INTS11/CPSF3L, INTS12, INTS13, INTS14 and INTS15. The core complex associates with protein phosphatase 2A subunits PPP2CA and PPP2R1A, to form the Integrator-PP2A (INTAC) complex. In terms of tissue distribution, widely expressed. Expressed in heart, brain, placenta, lung, liver, skeletal muscle, kidney and pancreas.

The protein resides in the nucleus. The protein localises to the chromosome. Functionally, component of the integrator complex, a multiprotein complex that terminates RNA polymerase II (Pol II) transcription in the promoter-proximal region of genes. The integrator complex provides a quality checkpoint during transcription elongation by driving premature transcription termination of transcripts that are unfavorably configured for transcriptional elongation: the complex terminates transcription by (1) catalyzing dephosphorylation of the C-terminal domain (CTD) of Pol II subunit POLR2A and SUPT5H/SPT5, (2) degrading the exiting nascent RNA transcript via endonuclease activity and (3) promoting the release of Pol II from bound DNA. The integrator complex is also involved in terminating the synthesis of non-coding Pol II transcripts, such as enhancer RNAs (eRNAs), small nuclear RNAs (snRNAs), telomerase RNAs and long non-coding RNAs (lncRNAs). Within the integrator complex, INTS6 acts as a molecular adapter that promotes assembly of protein phosphatase 2A (PP2A) subunits to the integrator core complex, promoting recruitment of PP2A to transcription pause-release checkpoint. Mediates recruitment of cytoplasmic dynein to the nuclear envelope, probably as component of the integrator complex. May have a tumor suppressor role; an ectopic expression suppressing tumor cell growth. The polypeptide is Integrator complex subunit 6 (Homo sapiens (Human)).